Here is a 399-residue protein sequence, read N- to C-terminus: Coenzyme A biosynthesis bifunctional protein CoaBC (399 aa).

A phosphopantothenoylcysteine decarboxylase region spans residues 1 to 190 (MQTLAGKKIL…FQPKVLEGKS (190 aa)). The Proton donor role is filled by C159. Residues 191 to 399 (ILISAGPTRE…KILEKMRELM (209 aa)) form a phosphopantothenate--cysteine ligase region. CTP contacts are provided by residues D279, K289, 307–310 (PDIV), F326, K340, and K344.

The protein in the N-terminal section; belongs to the HFCD (homo-oligomeric flavin containing Cys decarboxylase) superfamily. It in the C-terminal section; belongs to the PPC synthetase family. It depends on Mg(2+) as a cofactor. FMN is required as a cofactor.

The catalysed reaction is N-[(R)-4-phosphopantothenoyl]-L-cysteine + H(+) = (R)-4'-phosphopantetheine + CO2. The enzyme catalyses (R)-4'-phosphopantothenate + L-cysteine + CTP = N-[(R)-4-phosphopantothenoyl]-L-cysteine + CMP + diphosphate + H(+). It participates in cofactor biosynthesis; coenzyme A biosynthesis; CoA from (R)-pantothenate: step 2/5. The protein operates within cofactor biosynthesis; coenzyme A biosynthesis; CoA from (R)-pantothenate: step 3/5. In terms of biological role, catalyzes two sequential steps in the biosynthesis of coenzyme A. In the first step cysteine is conjugated to 4'-phosphopantothenate to form 4-phosphopantothenoylcysteine. In the second step the latter compound is decarboxylated to form 4'-phosphopantotheine. The protein is Coenzyme A biosynthesis bifunctional protein CoaBC of Vibrio parahaemolyticus serotype O3:K6 (strain RIMD 2210633).